Reading from the N-terminus, the 147-residue chain is Large ribosomal subunit protein uL22 (147 aa).

Positions 110 to 147 (EEKKTVAKKAPAAKKTTTTKAPAKKTTSTKKATAKKES) are disordered. Low complexity predominate over residues 117 to 140 (KKAPAAKKTTTTKAPAKKTTSTKK).

Belongs to the universal ribosomal protein uL22 family. Part of the 50S ribosomal subunit.

In terms of biological role, this protein binds specifically to 23S rRNA; its binding is stimulated by other ribosomal proteins, e.g. L4, L17, and L20. It is important during the early stages of 50S assembly. It makes multiple contacts with different domains of the 23S rRNA in the assembled 50S subunit and ribosome. Functionally, the globular domain of the protein is located near the polypeptide exit tunnel on the outside of the subunit, while an extended beta-hairpin is found that lines the wall of the exit tunnel in the center of the 70S ribosome. The protein is Large ribosomal subunit protein uL22 of Campylobacter jejuni subsp. jejuni serotype O:23/36 (strain 81-176).